The chain runs to 412 residues: Aspartate aminotransferase, cytoplasmic (412 aa).

At Ala2 the chain carries N-acetylalanine. Gly38, Trp140, and Asn194 together coordinate L-aspartate. Lys258 carries the post-translational modification N6-(pyridoxal phosphate)lysine. Residue Arg386 participates in L-aspartate binding.

The protein belongs to the class-I pyridoxal-phosphate-dependent aminotransferase family. Homodimer. The cofactor is pyridoxal 5'-phosphate.

The protein resides in the cytoplasm. The catalysed reaction is L-aspartate + 2-oxoglutarate = oxaloacetate + L-glutamate. The enzyme catalyses L-cysteine + 2-oxoglutarate = 2-oxo-3-sulfanylpropanoate + L-glutamate. It catalyses the reaction (2S)-2-aminobutanoate + 2-oxoglutarate = 2-oxobutanoate + L-glutamate. It carries out the reaction 3-sulfino-L-alanine + 2-oxoglutarate = 3-sulfinopyruvate + L-glutamate. Biosynthesis of L-glutamate from L-aspartate or L-cysteine. Important regulator of levels of glutamate, the major excitatory neurotransmitter of the vertebrate central nervous system. Acts as a scavenger of glutamate in brain neuroprotection. The aspartate aminotransferase activity is involved in hepatic glucose synthesis during development and in adipocyte glyceroneogenesis. Using L-cysteine as substrate, regulates levels of mercaptopyruvate, an important source of hydrogen sulfide. Mercaptopyruvate is converted into H(2)S via the action of 3-mercaptopyruvate sulfurtransferase (3MST). Hydrogen sulfide is an important synaptic modulator and neuroprotectant in the brain. This is Aspartate aminotransferase, cytoplasmic from Gallus gallus (Chicken).